The following is a 119-amino-acid chain: NADH-quinone oxidoreductase subunit A (119 aa).

Transmembrane regions (helical) follow at residues phenylalanine 7 to glycine 27, leucine 63 to valine 83, and isoleucine 88 to valine 108.

The protein belongs to the complex I subunit 3 family. NDH-1 is composed of 14 different subunits. Subunits NuoA, H, J, K, L, M, N constitute the membrane sector of the complex.

The protein resides in the cell inner membrane. The catalysed reaction is a quinone + NADH + 5 H(+)(in) = a quinol + NAD(+) + 4 H(+)(out). In terms of biological role, NDH-1 shuttles electrons from NADH, via FMN and iron-sulfur (Fe-S) centers, to quinones in the respiratory chain. The immediate electron acceptor for the enzyme in this species is believed to be ubiquinone. Couples the redox reaction to proton translocation (for every two electrons transferred, four hydrogen ions are translocated across the cytoplasmic membrane), and thus conserves the redox energy in a proton gradient. In Cupriavidus pinatubonensis (strain JMP 134 / LMG 1197) (Cupriavidus necator (strain JMP 134)), this protein is NADH-quinone oxidoreductase subunit A.